A 426-amino-acid polypeptide reads, in one-letter code: MKVVVLGAGVIGVTTAWYLAKAGHEVVVLERQDGAALETSFANAGEISPGYASPWASPGVPRKAPKWLLARHAPLIVRPSLDPALLSWLLAMLRNCTTERYLANKARMVRLAEHSRDCLIALRRETGIQYDQRSRGTLQVFRTQAQMDEAGKDMEVLRDLGVPYELLDRLGCIAREPGLGHARDTIVGGLRLPNDETGDCFKFTTALADLCRGQGVDFRFGTTIQGLETAGGEVGGVRTPGGTVTGDAYVVCLGSYSEPFLRPHGIRTGVYPVKGYSLTATITDEAKAPVSTLLDETYKVAITRLGDRVRIGGLAELAGYDLSLRPSRRATLEHSAGSLFGGSCDLPSATFWCGLRPMTPTSTPRIGEAPLRRLFLNTGHGTLGWTMACGSAQVLADAVGRQAPALDLTDYAVPGSPAAEPLRRAA.

FAD is bound at residue 3 to 17; that stretch reads VVVLGAGVIGVTTAW.

It belongs to the DadA oxidoreductase family. It depends on FAD as a cofactor.

The catalysed reaction is a D-alpha-amino acid + A + H2O = a 2-oxocarboxylate + AH2 + NH4(+). It functions in the pathway amino-acid degradation; D-alanine degradation; NH(3) and pyruvate from D-alanine: step 1/1. Oxidative deamination of D-amino acids. This is D-amino acid dehydrogenase from Phenylobacterium zucineum (strain HLK1).